A 204-amino-acid polypeptide reads, in one-letter code: UPF0637 protein SaurJH9_1166 (204 aa).

The protein belongs to the UPF0637 family.

The chain is UPF0637 protein SaurJH9_1166 from Staphylococcus aureus (strain JH9).